We begin with the raw amino-acid sequence, 305 residues long: tRNA dimethylallyltransferase (305 aa).

An ATP-binding site is contributed by glycine 13 to threonine 20. Position 15–20 (threonine 15–threonine 20) interacts with substrate. Positions aspartate 39–glutamine 42 are interaction with substrate tRNA.

This sequence belongs to the IPP transferase family. Monomer. The cofactor is Mg(2+).

It catalyses the reaction adenosine(37) in tRNA + dimethylallyl diphosphate = N(6)-dimethylallyladenosine(37) in tRNA + diphosphate. Catalyzes the transfer of a dimethylallyl group onto the adenine at position 37 in tRNAs that read codons beginning with uridine, leading to the formation of N6-(dimethylallyl)adenosine (i(6)A). The chain is tRNA dimethylallyltransferase from Neorickettsia sennetsu (strain ATCC VR-367 / Miyayama) (Ehrlichia sennetsu).